The sequence spans 264 residues: MNGMAPPLFEPKERVLQLGETFEKQPRCAFHTVRYDFKPASIDTACEGDLEVGKGEQVTITLPNIEGSTPPVTVFKGSKKPYLKECILIINHDTGECRLEKLSSNITVKKIRAEGSSKVQSRIEQQQQQIRNSSKTPNNIKNSPPKDKMFPSSPMDDIERELKAEASIMDQLSSSDSSSDSKSSSSSSSSSENSSSDSEDEEARPSLPMSMPYLQPQPTLSAIPHQAVPDKDASHNRSQENSGHMMNTLRSDLQLSESGSDSDD.

2 disordered regions span residues 114-154 and 169-264; these read EGSS…PSSP and MDQL…DSDD. The span at 117 to 142 shows a compositional bias: polar residues; sequence SKVQSRIEQQQQQIRNSSKTPNNIKN. The segment covering 173–196 has biased composition (low complexity); the sequence is SSSDSSSDSKSSSSSSSSSENSSS. Basic and acidic residues predominate over residues 228–238; the sequence is VPDKDASHNRS. The segment covering 239-264 has biased composition (polar residues); it reads QENSGHMMNTLRSDLQLSESGSDSDD.

It belongs to the EAF family.

It localises to the nucleus speckle. Its function is as follows. May act as a transcriptional transactivator. The protein is ELL-associated factor 2 (EAF2) of Gallus gallus (Chicken).